The chain runs to 561 residues: Zinc finger protein 394 (561 aa).

The segment at 1 to 61 is disordered; it reads MNSSLTAQRR…NYPAASPDPE (61 aa). S12 carries the post-translational modification Phosphoserine. K40 participates in a covalent cross-link: Glycyl lysine isopeptide (Lys-Gly) (interchain with G-Cter in SUMO2). Positions 64–146 constitute an SCAN box domain; that stretch reads RLHFRQLRYQ…AVVRALQRAL (83 aa). The region spanning 155-230 is the KRAB domain; that stretch reads VTFEDTAVSL…LQEAFQGKRP (76 aa). Residues 182 to 201 are disordered; the sequence is ESAQKDSGSTVPPSLESRVE. Glycyl lysine isopeptide (Lys-Gly) (interchain with G-Cter in SUMO2) cross-links involve residues K203 and K228. The disordered stretch occupies residues 231–285; sequence LFSKCGSTHEDRVEKQSGDPLPLKLENSPEAEGLNSISDVNKNGSIEGEDSKNNE. Basic and acidic residues predominate over residues 237–247; sequence STHEDRVEKQS. K254 is covalently cross-linked (Glycyl lysine isopeptide (Lys-Gly) (interchain with G-Cter in SUMO2)). The span at 265-274 shows a compositional bias: polar residues; sequence NSISDVNKNG. K282 participates in a covalent cross-link: Glycyl lysine isopeptide (Lys-Gly) (interchain with G-Cter in SUMO2). 7 consecutive C2H2-type zinc fingers follow at residues 358–380, 386–408, 414–436, 442–463, 469–491, 497–519, and 525–547; these read YKCG…QRIH, YGCQ…QRTH, YTCL…QSTH, FKCE…QRLH, YKCE…HRIH, YGCS…QRIH, and YKCL…QRIH. K443 is covalently cross-linked (Glycyl lysine isopeptide (Lys-Gly) (interchain with G-Cter in SUMO2)).

It belongs to the krueppel C2H2-type zinc-finger protein family.

The protein resides in the nucleus. Its function is as follows. May be involved in transcriptional regulation. The sequence is that of Zinc finger protein 394 (ZNF394) from Homo sapiens (Human).